Reading from the N-terminus, the 88-residue chain is Small ribosomal subunit protein uS17 (88 aa).

Belongs to the universal ribosomal protein uS17 family. Part of the 30S ribosomal subunit.

In terms of biological role, one of the primary rRNA binding proteins, it binds specifically to the 5'-end of 16S ribosomal RNA. This chain is Small ribosomal subunit protein uS17, found in Mycoplasmopsis pulmonis (strain UAB CTIP) (Mycoplasma pulmonis).